The following is a 163-amino-acid chain: Nucleotide-binding protein HDEF_1968 (163 aa).

This sequence belongs to the YajQ family.

In terms of biological role, nucleotide-binding protein. In Hamiltonella defensa subsp. Acyrthosiphon pisum (strain 5AT), this protein is Nucleotide-binding protein HDEF_1968.